The chain runs to 85 residues: Polcalcin Bet v 4 (85 aa).

EF-hand domains are found at residues 7–42 (QDKAERERIFKRFDANGDGKISAAELGEALKTLGSI) and 42–77 (ITPDEVKHMMAEIDTDGDGFISFQEFTDFGRANRGL). Ca(2+) is bound by residues aspartate 20, asparagine 22, aspartate 24, lysine 26, glutamate 31, aspartate 55, aspartate 57, aspartate 59, and glutamate 66.

As to quaternary structure, monomer.

The protein is Polcalcin Bet v 4 (BETV4) of Betula pendula (European white birch).